A 153-amino-acid chain; its full sequence is Probable histone H2A.4 (153 aa).

Basic residues predominate over residues 1-12 (MDSGTKVKKGAA). Disordered regions lie at residues 1–30 (MDSGTKVKKGAAGRRSGGGPKKKPVSRSVK) and 129–153 (KSEKAASTTKTPKSPSKATKSPKKS). Residues 133–147 (AASTTKTPKSPSKAT) show a composition bias toward low complexity. The SPKK motif signature appears at 149 to 152 (SPKK).

Belongs to the histone H2A family. The nucleosome is a histone octamer containing two molecules each of H2A, H2B, H3 and H4 assembled in one H3-H4 heterotetramer and two H2A-H2B heterodimers. The octamer wraps approximately 147 bp of DNA. Not ubiquitinated.

It is found in the nucleus. The protein resides in the chromosome. In terms of biological role, core component of nucleosome. Nucleosomes wrap and compact DNA into chromatin, limiting DNA accessibility to the cellular machineries which require DNA as a template. Histones thereby play a central role in transcription regulation, DNA repair, DNA replication and chromosomal stability. DNA accessibility is regulated via a complex set of post-translational modifications of histones, also called histone code, and nucleosome remodeling. The chain is Probable histone H2A.4 from Arabidopsis thaliana (Mouse-ear cress).